We begin with the raw amino-acid sequence, 224 residues long: EF-hand calcium-binding domain-containing protein 1 (224 aa).

The first 21 residues, 1-21 (MKVSLLLLALVLVCLVQGSES), serve as a signal peptide directing secretion. The EF-hand domain occupies 115–150 (IAHPDFMKAYSIADVDGDGELSPKEFYNGPYVFEMD). Ca(2+) is bound by residues aspartate 128, aspartate 130, aspartate 132, glutamate 134, and glutamate 139.

In terms of tissue distribution, component of the acid-soluble organic matrix of calcified layers of the shell (at protein level).

Its subcellular location is the secreted. This is EF-hand calcium-binding domain-containing protein 1 from Lottia gigantea (Giant owl limpet).